Reading from the N-terminus, the 530-residue chain is 4,4'-diapolycopene aldehyde oxidase (530 aa).

Catalysis depends on residues glutamate 234 and cysteine 268.

Belongs to the aldehyde dehydrogenase family.

The catalysed reaction is all-trans-4,4'-diapolycopen-4-al + A + H2O = all-trans-4,4'-diapolycopen-4-oate + AH2 + H(+). It carries out the reaction all-trans-4,4'-diapolycopene-4,4'-dial + 2 A + 2 H2O = all-trans-4,4'-diapolycopene-4,4'-dioate + 2 AH2 + 2 H(+). Its pathway is carotenoid biosynthesis. Its function is as follows. Involved in the biosynthesis of C30 carotenoids. Catalyzes the oxidation of 4,4'-diapolycopene-4,4'-dial to yield 4,4'-diapolycopene-4,4'-dioic acid. Also able to catalyze the oxidation of 4,4'-diapolycopen-4-al to yield 4,4'-diapolycopen-4-oic acid. In Methylomonas sp, this protein is 4,4'-diapolycopene aldehyde oxidase.